Consider the following 229-residue polypeptide: Wtf element wtf14 (229 aa).

The segment covering 1–26 (MENNHHLAKDSLDELNPKRGKGEHET) has biased composition (basic and acidic residues). A disordered region spans residues 1–27 (MENNHHLAKDSLDELNPKRGKGEHETQ). 4 helical membrane-spanning segments follow: residues 71–91 (IPAV…YLVF), 100–120 (VLFG…LLAT), 151–171 (LYAI…LMFF), and 188–208 (VIGV…PGLF).

It belongs to the WTF family.

The protein localises to the endoplasmic reticulum membrane. In terms of biological role, may act in meiotic drive. The polypeptide is Wtf element wtf14 (Schizosaccharomyces pombe (strain 972 / ATCC 24843) (Fission yeast)).